Consider the following 384-residue polypeptide: Alpha-2B adrenergic receptor (384 aa).

Residues 1–25 (AIAAVTTFLILFTVFGNALVILAVL) form a helical membrane-spanning segment. The Cytoplasmic portion of the chain corresponds to 26–36 (TSRSLRAPQNL). A helical membrane pass occupies residues 37–62 (FLVSLAAADILVATLIXPFSLANELL). The Extracellular portion of the chain corresponds to 63–72 (GYWYFWHTWC). C72 and C151 are disulfide-bonded. The helical transmembrane segment at 73–95 (EVYLALXVLXCTSSIVHLCAISL) threads the bilayer. The Cytoplasmic segment spans residues 96-117 (DRYWAVSRALEYNSKRTPRRIX). A helical transmembrane segment spans residues 118–140 (GIILTVWLIAAAISLPPLIYKGD). Over 141–156 (QGPQPHGRPQCRLNQE) the chain is Extracellular. Residues 157 to 180 (AWYILSSSIGSFFAPCLIMILVYL) form a helical membrane-spanning segment. The Cytoplasmic portion of the chain corresponds to 181–348 (RIYLIAKRRN…LTREKRFTFV (168 aa)). The segment at 193 to 306 (GPRAQGASKG…SXGSPQLQQP (114 aa)) is disordered. Low complexity predominate over residues 288–306 (PEALPASPASXGSPQLQQP). Residues 349-372 (LAVVIGVXVLCWFPFFXSYSLGAI) form a helical membrane-spanning segment. Topologically, residues 373–381 (CPQHCTVXH) are extracellular. The helical transmembrane segment at 382 to 384 (GLF) threads the bilayer.

Belongs to the G-protein coupled receptor 1 family. Adrenergic receptor subfamily. ADRA2B sub-subfamily. In terms of assembly, interacts with RAB26. Interacts with PPP1R9B. Interacts with GGA1, GGA2 and GGA3.

Its subcellular location is the cell membrane. Alpha-2 adrenergic receptors mediate the catecholamine-induced inhibition of adenylate cyclase through the action of G proteins. In Echinops telfairi (Lesser hedgehog tenrec), this protein is Alpha-2B adrenergic receptor (ADRA2B).